The following is a 132-amino-acid chain: Vesicle transport protein GOT1A (132 aa).

The Cytoplasmic portion of the chain corresponds to 1 to 9; it reads MISITEWQK. Residues 10-30 form a helical membrane-spanning segment; the sequence is IGVGITGFGIFFILFGTLLYF. A topological domain (lumenal) is located at residue Asp31. Residues 32–52 traverse the membrane as a helical segment; sequence SVLLAFGNLLFLTGLSLIIGL. Over 53-68 the chain is Cytoplasmic; sequence RKTFWFFFQRHKLKGT. Residues 69–89 form a helical membrane-spanning segment; the sequence is SFLLGGVVIVLLRWPLLGMFL. The Lumenal portion of the chain corresponds to 90-100; the sequence is ETYGFFSLFKG. A helical transmembrane segment spans residues 101 to 121; sequence FFPVAFGFLGNVCNIPFLGAL. Residues 122–132 are Cytoplasmic-facing; it reads FRRLQGTSSMV.

It belongs to the GOT1 family.

The protein localises to the golgi apparatus membrane. May be involved in fusion of ER-derived transport vesicles with the Golgi complex. This is Vesicle transport protein GOT1A from Homo sapiens (Human).